The chain runs to 655 residues: Inactive serine protease scarface (655 aa).

A signal peptide spans 1–24; that stretch reads MSASHFREQLALCITLAVLAAASG. Polar residues-rich tracts occupy residues 213–225 and 237–252; these read TQAPFRPQPTTAV and PSTTQHPSYEKVQTSR. Positions 213 to 319 are disordered; the sequence is TQAPFRPQPT…QPSNQKPIYR (107 aa). A CLIP region spans residues 343 to 407; sequence KCASALVCTS…PNYVDPWPVN (65 aa). Disulfide bonds link Cys-344-Cys-394, Cys-350-Cys-383, Cys-356-Cys-395, Cys-450-Cys-466, Cys-547-Cys-605, Cys-579-Cys-587, and Cys-595-Cys-623. The region spanning 421-644 is the Peptidase S1 domain; sequence PTGVKDLDAN…DIKWINTAFA (224 aa).

The protein belongs to the peptidase S1 family.

It localises to the secreted. Inactive serine protease that plays a role in germ-band retraction and dorsal closure morphogenesis in embryogenesis; contributes to amnioserosa attachment and epithelial apico-basal polarity by regulating the localization of laminin LanA on the apical side of the amnioserosa epithelium. Contributes to epithelial morphogenesis probably by regulating the bsk/JNK pathway, as part of a negative-feedback loop, and by modulating the cross-talk between the Egfr, bsk/JNK and dpp signal transduction pathways. In larval development, antagonizes the morphogenetic movements controlled by the bsk/JNK signaling including male genitalia formation and thorax development. The polypeptide is Inactive serine protease scarface (Drosophila melanogaster (Fruit fly)).